The following is a 481-amino-acid chain: Transmembrane protein 39A (481 aa).

The next 8 helical transmembrane spans lie at 74–94 (LFET…YINI), 109–129 (STSL…AVML), 150–170 (LCYV…GWVL), 182–202 (SVLK…LCCL), 278–298 (EVLF…LCFV), 313–333 (LIMV…PPHY), 411–431 (LLNV…YSLL), and 437–457 (NHTL…FKLL).

It belongs to the TMEM39 family.

Its subcellular location is the endoplasmic reticulum membrane. Its function is as follows. Regulates autophagy by controlling the spatial distribution and levels of the intracellular phosphatidylinositol 4-phosphate (PtdIns(4)P) pools. Modulates (PtdIns(4)P) levels by regulating the ER-to-Golgi trafficking of the phosphatidylinositide phosphatase SACM1L. This is Transmembrane protein 39A (tmem39a) from Danio rerio (Zebrafish).